A 221-amino-acid chain; its full sequence is Endonuclease V (221 aa).

Asp38 and Asp104 together coordinate Mg(2+).

This sequence belongs to the endonuclease V family. Requires Mg(2+) as cofactor.

The protein localises to the cytoplasm. The enzyme catalyses Endonucleolytic cleavage at apurinic or apyrimidinic sites to products with a 5'-phosphate.. Functionally, DNA repair enzyme involved in the repair of deaminated bases. Selectively cleaves double-stranded DNA at the second phosphodiester bond 3' to a deoxyinosine leaving behind the intact lesion on the nicked DNA. Recognizes only deoxyinosine. The sequence is that of Endonuclease V from Archaeoglobus fulgidus (strain ATCC 49558 / DSM 4304 / JCM 9628 / NBRC 100126 / VC-16).